The sequence spans 467 residues: Siroheme synthase 2 (467 aa).

The interval 1–204 is precorrin-2 dehydrogenase /sirohydrochlorin ferrochelatase; it reads MDYLPIFCQL…NDVALAERQI (204 aa). Residues 22 to 23 and 43 to 44 each bind NAD(+); these read EI and CS. Serine 128 carries the post-translational modification Phosphoserine. The tract at residues 216–467 is uroporphyrinogen-III C-methyltransferase; sequence GEVVLVGAGP…EPSQPLAQMA (252 aa). Position 225 (proline 225) interacts with S-adenosyl-L-methionine. Aspartate 248 serves as the catalytic Proton acceptor. Catalysis depends on lysine 270, which acts as the Proton donor. Residues 301–303, isoleucine 306, 331–332, methionine 382, and glycine 411 each bind S-adenosyl-L-methionine; these read GGD and TA.

This sequence in the N-terminal section; belongs to the precorrin-2 dehydrogenase / sirohydrochlorin ferrochelatase family. It in the C-terminal section; belongs to the precorrin methyltransferase family.

The enzyme catalyses uroporphyrinogen III + 2 S-adenosyl-L-methionine = precorrin-2 + 2 S-adenosyl-L-homocysteine + H(+). It catalyses the reaction precorrin-2 + NAD(+) = sirohydrochlorin + NADH + 2 H(+). It carries out the reaction siroheme + 2 H(+) = sirohydrochlorin + Fe(2+). Its pathway is cofactor biosynthesis; adenosylcobalamin biosynthesis; precorrin-2 from uroporphyrinogen III: step 1/1. It functions in the pathway cofactor biosynthesis; adenosylcobalamin biosynthesis; sirohydrochlorin from precorrin-2: step 1/1. It participates in porphyrin-containing compound metabolism; siroheme biosynthesis; precorrin-2 from uroporphyrinogen III: step 1/1. The protein operates within porphyrin-containing compound metabolism; siroheme biosynthesis; siroheme from sirohydrochlorin: step 1/1. Its pathway is porphyrin-containing compound metabolism; siroheme biosynthesis; sirohydrochlorin from precorrin-2: step 1/1. Multifunctional enzyme that catalyzes the SAM-dependent methylations of uroporphyrinogen III at position C-2 and C-7 to form precorrin-2 via precorrin-1. Then it catalyzes the NAD-dependent ring dehydrogenation of precorrin-2 to yield sirohydrochlorin. Finally, it catalyzes the ferrochelation of sirohydrochlorin to yield siroheme. The chain is Siroheme synthase 2 from Serratia proteamaculans (strain 568).